A 367-amino-acid polypeptide reads, in one-letter code: Quinolinate synthase (367 aa).

Iminosuccinate-binding residues include His-64 and Ser-82. Cys-127 is a [4Fe-4S] cluster binding site. Iminosuccinate contacts are provided by residues 153-155 (YVN) and Ser-170. Cys-216 lines the [4Fe-4S] cluster pocket. Residues 242 to 244 (HPE) and Thr-259 contribute to the iminosuccinate site. A [4Fe-4S] cluster-binding site is contributed by Cys-302.

The protein belongs to the quinolinate synthase family. Type 2 subfamily. [4Fe-4S] cluster serves as cofactor.

Its subcellular location is the cytoplasm. The enzyme catalyses iminosuccinate + dihydroxyacetone phosphate = quinolinate + phosphate + 2 H2O + H(+). The protein operates within cofactor biosynthesis; NAD(+) biosynthesis; quinolinate from iminoaspartate: step 1/1. Its function is as follows. Catalyzes the condensation of iminoaspartate with dihydroxyacetone phosphate to form quinolinate. The polypeptide is Quinolinate synthase (Caulobacter vibrioides (strain ATCC 19089 / CIP 103742 / CB 15) (Caulobacter crescentus)).